The sequence spans 139 residues: Hydrogenase maturation factor HypA (139 aa).

H2 is a binding site for Ni(2+). Positions 73, 76, 110, and 113 each coordinate Zn(2+).

It belongs to the HypA/HybF family.

Involved in the maturation of [NiFe] hydrogenases. Required for nickel insertion into the metal center of the hydrogenase. The sequence is that of Hydrogenase maturation factor HypA from Pyrococcus abyssi (strain GE5 / Orsay).